Reading from the N-terminus, the 263-residue chain is Proteasome subunit alpha type-1 (263 aa).

M1 is subject to N-acetylmethionine. Position 110 is a phosphoserine; alternate (S110). S110 carries O-linked (GlcNAc) serine; alternate glycosylation. K115 is covalently cross-linked (Glycyl lysine isopeptide (Lys-Gly) (interchain with G-Cter in ubiquitin)). A Phosphoserine modification is found at S177. K208 is covalently cross-linked (Glycyl lysine isopeptide (Lys-Gly) (interchain with G-Cter in ubiquitin)). A disordered region spans residues 232-263; that stretch reads FLEGLEERPQRKAQPAQPADEPAEKADEPMEH. A compositionally biased stretch (basic and acidic residues) spans 253–263; that stretch reads PAEKADEPMEH.

It belongs to the peptidase T1A family. As to quaternary structure, the 26S proteasome consists of a 20S proteasome core and two 19S regulatory subunits. The 20S proteasome core is a barrel-shaped complex made of 28 subunits that are arranged in four stacked rings. The two outer rings are each formed by seven alpha subunits, and the two inner rings are formed by seven beta subunits. The proteolytic activity is exerted by three beta-subunits PSMB5, PSMB6 and PSMB7. Interacts with NOTCH3. Interacts with ZFAND1.

It localises to the cytoplasm. Its subcellular location is the nucleus. Its function is as follows. Component of the 20S core proteasome complex involved in the proteolytic degradation of most intracellular proteins. This complex plays numerous essential roles within the cell by associating with different regulatory particles. Associated with two 19S regulatory particles, forms the 26S proteasome and thus participates in the ATP-dependent degradation of ubiquitinated proteins. The 26S proteasome plays a key role in the maintenance of protein homeostasis by removing misfolded or damaged proteins that could impair cellular functions, and by removing proteins whose functions are no longer required. Associated with the PA200 or PA28, the 20S proteasome mediates ubiquitin-independent protein degradation. This type of proteolysis is required in several pathways including spermatogenesis (20S-PA200 complex) or generation of a subset of MHC class I-presented antigenic peptides (20S-PA28 complex). The protein is Proteasome subunit alpha type-1 (PSMA1) of Macaca fascicularis (Crab-eating macaque).